The chain runs to 497 residues: Cytochrome P450 76AD1 (497 aa).

Residues 4–24 form a helical membrane-spanning segment; sequence ATLAMILAIWFISFHFIKLLF. Heme is bound at residue cysteine 439.

It belongs to the cytochrome P450 family. It depends on heme as a cofactor.

The protein resides in the membrane. The protein operates within pigment biosynthesis; betalain biosynthesis. Converts L-DOPA to cyclo-DOPA in the betalain pathway. Provides the cyclo-DOPA moiety of all red betacyanins. This chain is Cytochrome P450 76AD1, found in Beta vulgaris (Sugar beet).